A 1642-amino-acid chain; its full sequence is Cortactin-binding protein 2 (1642 aa).

Disordered regions lie at residues 1–27 (MATD…AEAA), 203–222 (KKKT…RSTE), 366–433 (IGAS…HPGL), 446–471 (GSNA…SPTS), and 491–611 (RFTS…PSID). Residues 119 to 276 (RKMQERMSTQ…EQLKRGTDSK (158 aa)) are a coiled coil. Polar residues predominate over residues 385 to 394 (GPSTGSTADL). Over residues 395–407 (TSSPTPVPSTVSP) the composition is skewed to low complexity. An Asymmetric dimethylarginine modification is found at R491. Positions 497 to 506 (AGAPPRPGAP) are enriched in pro residues. The span at 576–586 (TVASPPSTLPQ) shows a compositional bias: polar residues. ANK repeat units lie at residues 702–732 (GRPT…DINY), 736–765 (DGHS…QVNA), 769–798 (NGFT…NINH), 802–831 (GGQT…DRSV), 835–864 (DGWT…PAHG), and 904–934 (EGWT…EPER). The interval 1441 to 1469 (SGAWRKVSTSPRKKSGRFSSPTWNKPDLS) is disordered. At S1513 the chain carries Phosphoserine. Positions 1545–1642 (LRRFDSSGNN…NSRDLEPTQK (98 aa)) are disordered. Polar residues-rich tracts occupy residues 1552–1563 (GNNPVFSATVNN) and 1571–1588 (KEVS…SNSK). Residues 1613 to 1627 (SQNTKRSSSSSNTRQ) show a composition bias toward low complexity.

As to quaternary structure, interacts with CTTN/cortactin SH3 domain. Interacts with STRN, STRN4/zinedin and MOB4/phocein; this interactions mediate the association with the STRIPAK core complex and may regulate dendritic spine distribution of the STRIPAK complex in hippocampal neurons. Activation of glutamate receptors weakens the interaction with STRN and STRN4.

Its subcellular location is the cytoplasm. The protein resides in the cell cortex. It localises to the cell projection. It is found in the dendritic spine. Regulates the dendritic spine distribution of CTTN/cortactin in hippocampal neurons, and thus controls dendritic spinogenesis and dendritic spine maintenance. Associates with the striatin-interacting phosphatase and kinase (STRIPAK) core complex to regulate dendritic spine distribution of the STRIPAK complex in hippocampal neurons. The protein is Cortactin-binding protein 2 (CTTNBP2) of Muntiacus muntjak (Barking deer).